The primary structure comprises 336 residues: Holliday junction branch migration complex subunit RuvB (336 aa).

The tract at residues 4-184 is large ATPase domain (RuvB-L); the sequence is ADRLISADAI…FGIVQRLEFY (181 aa). Residues R24, G65, K68, T69, T70, 131–133, R174, Y184, and R221 each bind ATP; that span reads EDY. T69 is a Mg(2+) binding site. The tract at residues 185–255 is small ATPAse domain (RuvB-S); that stretch reads NVADLQYIVG…VATQALDMLA (71 aa). The interval 258–336 is head domain (RuvB-H); that stretch reads TEGFDYMDRK…HFGLTREDLG (79 aa). DNA-binding residues include R294, R313, and R318.

Belongs to the RuvB family. In terms of assembly, homohexamer. Forms an RuvA(8)-RuvB(12)-Holliday junction (HJ) complex. HJ DNA is sandwiched between 2 RuvA tetramers; dsDNA enters through RuvA and exits via RuvB. An RuvB hexamer assembles on each DNA strand where it exits the tetramer. Each RuvB hexamer is contacted by two RuvA subunits (via domain III) on 2 adjacent RuvB subunits; this complex drives branch migration. In the full resolvosome a probable DNA-RuvA(4)-RuvB(12)-RuvC(2) complex forms which resolves the HJ.

It is found in the cytoplasm. The catalysed reaction is ATP + H2O = ADP + phosphate + H(+). The RuvA-RuvB-RuvC complex processes Holliday junction (HJ) DNA during genetic recombination and DNA repair, while the RuvA-RuvB complex plays an important role in the rescue of blocked DNA replication forks via replication fork reversal (RFR). RuvA specifically binds to HJ cruciform DNA, conferring on it an open structure. The RuvB hexamer acts as an ATP-dependent pump, pulling dsDNA into and through the RuvAB complex. RuvB forms 2 homohexamers on either side of HJ DNA bound by 1 or 2 RuvA tetramers; 4 subunits per hexamer contact DNA at a time. Coordinated motions by a converter formed by DNA-disengaged RuvB subunits stimulates ATP hydrolysis and nucleotide exchange. Immobilization of the converter enables RuvB to convert the ATP-contained energy into a lever motion, pulling 2 nucleotides of DNA out of the RuvA tetramer per ATP hydrolyzed, thus driving DNA branch migration. The RuvB motors rotate together with the DNA substrate, which together with the progressing nucleotide cycle form the mechanistic basis for DNA recombination by continuous HJ branch migration. Branch migration allows RuvC to scan DNA until it finds its consensus sequence, where it cleaves and resolves cruciform DNA. The chain is Holliday junction branch migration complex subunit RuvB from Pectobacterium carotovorum subsp. carotovorum (strain PC1).